The primary structure comprises 153 residues: MAVKIKLTRLGKIRNPQYRIVVADSRTRRNGRAIETIGKYHPKEEPSLIEVDSERAQYWLGVGAQPTEPVEAILKITGDWQKFKGLPGAEGTLRVKEAKPSKLELFQAALAQAENEPVGEAITPKKKKAKAEDAEAAADAPAEAAAESEAADK.

The disordered stretch occupies residues 114–153 (ENEPVGEAITPKKKKAKAEDAEAAADAPAEAAAESEAADK). Low complexity predominate over residues 137–153 (AADAPAEAAAESEAADK).

This sequence belongs to the bacterial ribosomal protein bS16 family.

This is Small ribosomal subunit protein bS16 from Rhodococcus jostii (strain RHA1).